Here is a 268-residue protein sequence, read N- to C-terminus: Mediator of RNA polymerase II transcription subunit 8 (268 aa).

Positions 1-28 (MQREEKQLEASLDALLSQVADLKNSLGS) form a coiled coil. Ser82 carries the post-translational modification Phosphoserine. A coiled-coil region spans residues 133–163 (ADAAQKQIQSLNKMCSNLLEKISKEERESES). Positions 142–151 (SLNKMCSNLL) are interaction with the Elongin BC complex. Disordered stretches follow at residues 156–176 (KEERESESGGLRPNKQTFNPT) and 193–268 (NWRP…PYQR). A compositionally biased stretch (gly residues) spans 200 to 209 (SGPGQAGQPG). Polar residues predominate over residues 218-235 (SGLQQVQMAGAPSQQQPM).

Belongs to the Mediator complex subunit 8 family. Component of the Mediator complex, which is composed of MED1, MED4, MED6, MED7, MED8, MED9, MED10, MED11, MED12, MED13, MED13L, MED14, MED15, MED16, MED17, MED18, MED19, MED20, MED21, MED22, MED23, MED24, MED25, MED26, MED27, MED29, MED30, MED31, CCNC, CDK8 and CDC2L6/CDK11. The MED12, MED13, CCNC and CDK8 subunits form a distinct module termed the CDK8 module. Mediator containing the CDK8 module is less active than Mediator lacking this module in supporting transcriptional activation. Individual preparations of the Mediator complex lacking one or more distinct subunits have been variously termed ARC, CRSP, DRIP, PC2, SMCC and TRAP. May be part of a multisubunit E3 ubiquitin-protein ligase complex with the elongin BC complex (ELOB and ELOC), CUL2 and RBX1.

The protein resides in the nucleus. The protein operates within protein modification; protein ubiquitination. In terms of biological role, component of the Mediator complex, a coactivator involved in the regulated transcription of nearly all RNA polymerase II-dependent genes. Mediator functions as a bridge to convey information from gene-specific regulatory proteins to the basal RNA polymerase II transcription machinery. Mediator is recruited to promoters by direct interactions with regulatory proteins and serves as a scaffold for the assembly of a functional preinitiation complex with RNA polymerase II and the general transcription factors. May play a role as a target recruitment subunit in E3 ubiquitin-protein ligase complexes and thus in ubiquitination and subsequent proteasomal degradation of target proteins. This is Mediator of RNA polymerase II transcription subunit 8 (MED8) from Homo sapiens (Human).